Here is a 481-residue protein sequence, read N- to C-terminus: Glycogen synthase (481 aa).

An ADP-alpha-D-glucose-binding site is contributed by Lys-16.

This sequence belongs to the glycosyltransferase 1 family. Bacterial/plant glycogen synthase subfamily.

It catalyses the reaction [(1-&gt;4)-alpha-D-glucosyl](n) + ADP-alpha-D-glucose = [(1-&gt;4)-alpha-D-glucosyl](n+1) + ADP + H(+). Its pathway is glycan biosynthesis; glycogen biosynthesis. In terms of biological role, synthesizes alpha-1,4-glucan chains using ADP-glucose. This chain is Glycogen synthase, found in Lacticaseibacillus casei (strain BL23) (Lactobacillus casei).